A 389-amino-acid chain; its full sequence is MTKLWVNFFSQKLLRLLIPSIIVVFAFAALFAIYSPIQLGGINFYKRTNLFTVEELGEKELELSKTVTIDIYRKAMCMDDLEQSRKCTTFGLDPPISAHLFYTYNRDTGMNRVARQWNRRIPRVFHTIKGSNFIELSQFTAFEVELRVSHPNWAFVSWSHDDLNELVDKSYHNLHNAWSQLSREAKDQWGFLLGLYEYGGVWMSRSLQLKKNIDKFVYAAELSVKQFTENITSSTVEEFQPIFMAPKSLQYDFMIATPKHPFVLSLINELCKSEVLLKILSKRPYHGLDAAEALFAENRESITIREQEFFVNTYIDDGKVFVKNNPHIIFIPTEAFASTWDFLPSEESSEMCFADSPLFDPDYCISHSSKPDGNELAIYWSNSFDLITA.

Topologically, residues Met1 to Leu16 are cytoplasmic. A helical transmembrane segment spans residues Leu17–Ile37. The Lumenal segment spans residues Gln38 to Ala389.

The protein resides in the endoplasmic reticulum membrane. It localises to the golgi apparatus membrane. In terms of biological role, involved in cell wall biogenesis. Has a role in the addition of Gal-beta1,3 moeities to galactomannans and their subsequent pyruvylation. Has a role in meiosis. The chain is Pyruvylated Gal-beta-1,3-epitope synthesis protein 2 (pvg2) from Schizosaccharomyces pombe (strain 972 / ATCC 24843) (Fission yeast).